The following is a 272-amino-acid chain: tRNA pseudouridine synthase A (272 aa).

The Nucleophile role is filled by aspartate 52. Tyrosine 110 is a substrate binding site.

The protein belongs to the tRNA pseudouridine synthase TruA family. As to quaternary structure, homodimer.

The enzyme catalyses uridine(38/39/40) in tRNA = pseudouridine(38/39/40) in tRNA. Its function is as follows. Formation of pseudouridine at positions 38, 39 and 40 in the anticodon stem and loop of transfer RNAs. The chain is tRNA pseudouridine synthase A from Cupriavidus taiwanensis (strain DSM 17343 / BCRC 17206 / CCUG 44338 / CIP 107171 / LMG 19424 / R1) (Ralstonia taiwanensis (strain LMG 19424)).